A 250-amino-acid polypeptide reads, in one-letter code: MKICLIDETGAGDGALSVLAARWGLEHDEDNLMALVLTPEHLELRKRDEPKLGGIFVDFVGGAMAHRRKFGGGRGEAVAKAVGIKGDYLPDVVDATAGLGRDAFVLASVGCRVRMLERNPVVAALLDDGLARGYADAEIGGWLQERLQLIHASSLTALSDITPRPQVVYLDPMFPHKQKSALVKKEMRVFQSLVGPDLDADGLLEPARLLATKRVVVKRPDYAPPLANVATPNAVVTKGHRFDIYAGTPV.

Residues 101–102, 117–118, 153–154, and D171 each bind S-adenosyl-L-methionine; these read RD, ER, and SS.

The protein belongs to the methyltransferase superfamily. RsmJ family.

It is found in the cytoplasm. The catalysed reaction is guanosine(1516) in 16S rRNA + S-adenosyl-L-methionine = N(2)-methylguanosine(1516) in 16S rRNA + S-adenosyl-L-homocysteine + H(+). Functionally, specifically methylates the guanosine in position 1516 of 16S rRNA. The chain is Ribosomal RNA small subunit methyltransferase J from Escherichia coli O81 (strain ED1a).